The chain runs to 878 residues: Protein translocase subunit SecA (878 aa).

ATP-binding positions include glutamine 79, 97–101 (GEGKT), and aspartate 487.

This sequence belongs to the SecA family.

The protein localises to the plastid. It localises to the chloroplast stroma. The protein resides in the chloroplast thylakoid membrane. The catalysed reaction is ATP + H2O + cellular proteinSide 1 = ADP + phosphate + cellular proteinSide 2.. Functionally, has a central role in coupling the hydrolysis of ATP to the transfer of proteins across the thylakoid membrane. In Antithamnion sp. (Red alga), this protein is Protein translocase subunit SecA.